Consider the following 228-residue polypeptide: Probable septum site-determining protein MinC (228 aa).

The protein belongs to the MinC family. Interacts with MinD and FtsZ.

Functionally, cell division inhibitor that blocks the formation of polar Z ring septums. Rapidly oscillates between the poles of the cell to destabilize FtsZ filaments that have formed before they mature into polar Z rings. Prevents FtsZ polymerization. The polypeptide is Probable septum site-determining protein MinC (Yersinia enterocolitica serotype O:8 / biotype 1B (strain NCTC 13174 / 8081)).